The chain runs to 336 residues: G patch domain and ankyrin repeat-containing protein 1 homolog (336 aa).

ANK repeat units follow at residues phenylalanine 123–threonine 152 and serine 156–threonine 185. Residues alanine 240 to glutamine 286 form the G-patch domain.

In Drosophila melanogaster (Fruit fly), this protein is G patch domain and ankyrin repeat-containing protein 1 homolog.